A 412-amino-acid chain; its full sequence is Sexual development regulator umv3 (412 aa).

The tract at residues 1–197 (MSAQDDIDTG…PPLLSDLPRH (197 aa)) is disordered. Composition is skewed to polar residues over residues 73–93 (RANTLSKQQPRGDLSQSSASS) and 149–170 (RQSAASNRLSDTNSSAPSPGST). Residues 171–181 (ENERVRMHDQR) are compositionally biased toward basic and acidic residues. Residues 195-388 (PRHSTDNKTY…ARQGIQVPVR (194 aa)) form the Velvet domain.

This sequence belongs to the velvet family. VelC subfamily.

It localises to the nucleus. Functionally, velvet-domain-containing protein not required for disease or sexual development on seedlings. This chain is Sexual development regulator umv3, found in Mycosarcoma maydis (Corn smut fungus).